Consider the following 187-residue polypeptide: UPF0301 protein Spro_4027 (187 aa).

The protein belongs to the UPF0301 (AlgH) family.

This is UPF0301 protein Spro_4027 from Serratia proteamaculans (strain 568).